We begin with the raw amino-acid sequence, 1128 residues long: Cordon-bleu protein-like 1 (1128 aa).

Residues 1 to 35 are disordered; it reads MDGRTPRPQDAPARRKPKAKAPLPPAETKYTDVSS. Thr139 carries the post-translational modification Phosphothreonine. Phosphoserine occurs at positions 204, 222, and 256. Disordered regions lie at residues 249–309, 325–441, and 454–499; these read KKRD…VPQD, MSVD…SPKS, and TLKN…TSNG. Thr260 is modified (phosphothreonine). The segment covering 270–286 has biased composition (polar residues); that stretch reads FTRSNTISKPYISNTLP. The residue at position 273 (Ser273) is a Phosphoserine. At Thr284 the chain carries Phosphothreonine. Residues 291–296 carry the KKRRAP 1 motif; sequence KKRRAP. Ser326, Ser333, Ser344, and Ser356 each carry phosphoserine. Residues 345–357 are compositionally biased toward polar residues; the sequence is LQLSSMSAGNSSL. Residues 360-365 carry the KKRRAP 2 motif; that stretch reads TKRKAP. A compositionally biased stretch (polar residues) spans 397–415; the sequence is SEANSPEELSSPAGISSDY. A compositionally biased stretch (acidic residues) spans 416–425; it reads SLEEIDEKEE. Ser438, Ser441, Ser461, Ser471, and Ser474 each carry phosphoserine. Positions 475–488 are enriched in basic and acidic residues; it reads MEEKQETKSTDGQE. A phosphoserine mark is found at Ser563, Ser584, Ser786, Ser813, Ser814, and Ser821. Disordered regions lie at residues 780–840, 882–964, 995–1081, and 1103–1128; these read TEDS…PFAP, SAAA…SQVS, RSQS…PEQM, and IPSNTISVNGRSRLSHSMSPDAQDGH. The segment covering 899 to 908 has biased composition (basic and acidic residues); that stretch reads LTNKEAERDM. Ser911, Ser917, Ser947, Ser1069, and Ser1070 each carry phosphoserine. Polar residues-rich tracts occupy residues 1045–1081 and 1103–1122; these read SAHNEQNSQIPTPTDGPSFTVMRQSSLTFQSSDPEQM and IPSNTISVNGRSRLSHSMSP. One can recognise a WH2 domain in the interval 1081 to 1101; it reads MRQSLLTAIRSGEAAAKLKRV. Ser1121 is modified (phosphoserine).

In Homo sapiens (Human), this protein is Cordon-bleu protein-like 1.